Consider the following 341-residue polypeptide: Protein pelota homolog (341 aa).

This sequence belongs to the eukaryotic release factor 1 family. Pelota subfamily. In terms of assembly, monomer. The cofactor is a divalent metal cation.

The protein resides in the cytoplasm. In terms of biological role, may function in recognizing stalled ribosomes, interact with stem-loop structures in stalled mRNA molecules, and effect endonucleolytic cleavage of the mRNA. May play a role in the release non-functional ribosomes and degradation of damaged mRNAs. Has endoribonuclease activity. The protein is Protein pelota homolog of Methanospirillum hungatei JF-1 (strain ATCC 27890 / DSM 864 / NBRC 100397 / JF-1).